The primary structure comprises 681 residues: DNA ligase (681 aa).

NAD(+)-binding positions include 33–37 (DGQFD), 83–84 (SL), and E113. The N6-AMP-lysine intermediate role is filled by K115. R136, E176, K292, and K316 together coordinate NAD(+). Positions 410, 413, 429, and 435 each coordinate Zn(2+). Residues 599–681 (SIPRNLEGLS…RALLADGPPA (83 aa)) enclose the BRCT domain.

It belongs to the NAD-dependent DNA ligase family. LigA subfamily. Requires Mg(2+) as cofactor. The cofactor is Mn(2+).

The enzyme catalyses NAD(+) + (deoxyribonucleotide)n-3'-hydroxyl + 5'-phospho-(deoxyribonucleotide)m = (deoxyribonucleotide)n+m + AMP + beta-nicotinamide D-nucleotide.. DNA ligase that catalyzes the formation of phosphodiester linkages between 5'-phosphoryl and 3'-hydroxyl groups in double-stranded DNA using NAD as a coenzyme and as the energy source for the reaction. It is essential for DNA replication and repair of damaged DNA. This is DNA ligase from Mycobacteroides abscessus (strain ATCC 19977 / DSM 44196 / CCUG 20993 / CIP 104536 / JCM 13569 / NCTC 13031 / TMC 1543 / L948) (Mycobacterium abscessus).